Here is a 334-residue protein sequence, read N- to C-terminus: Fructose-1,6-bisphosphatase class 1 (334 aa).

The Mg(2+) site is built by Glu90, Asp113, Leu115, and Asp116. Substrate contacts are provided by residues Asp116–Ser119, Asn209, Tyr242, and Lys272. Glu278 is a Mg(2+) binding site.

This sequence belongs to the FBPase class 1 family. In terms of assembly, homotetramer. Requires Mg(2+) as cofactor.

The protein localises to the cytoplasm. The enzyme catalyses beta-D-fructose 1,6-bisphosphate + H2O = beta-D-fructose 6-phosphate + phosphate. It functions in the pathway carbohydrate biosynthesis; gluconeogenesis. This is Fructose-1,6-bisphosphatase class 1 from Actinobacillus succinogenes (strain ATCC 55618 / DSM 22257 / CCUG 43843 / 130Z).